Here is a 1015-residue protein sequence, read N- to C-terminus: Transposase for transposon Tn3 (1015 aa).

This sequence belongs to the transposase 7 family.

Its function is as follows. Required for transposition of transposon Tn3. In Escherichia coli, this protein is Transposase for transposon Tn3 (tnpA).